A 287-amino-acid chain; its full sequence is Phosphate transport system permease protein PstA (287 aa).

The next 6 helical transmembrane spans lie at 22–42 (ISCIAALFGLFFLIWILWTLI), 70–90 (AFLGSAIMCLLAIVIGTPVGI), 115–135 (ILLSAPSIVLGLFVYTLYVMH), 138–158 (GHFSAFSGALALVFIVLPIVV), 199–219 (ILTGILLALARISGETAPLLF), and 255–275 (LLAWSGALVLTVFVLLVSLGA). The region spanning 71–279 (FLGSAIMCLL…LVSLGARALL (209 aa)) is the ABC transmembrane type-1 domain.

It belongs to the binding-protein-dependent transport system permease family. CysTW subfamily.

It localises to the cell inner membrane. In terms of biological role, part of a binding-protein-dependent transport system for phosphate; probably responsible for the translocation of the substrate across the membrane. The sequence is that of Phosphate transport system permease protein PstA (pstA) from Xylella fastidiosa (strain Temecula1 / ATCC 700964).